The following is an 823-amino-acid chain: MKLFGFGSRRGQTAEGSIDHVYTGSGYRIRDSELQKIHRAAVKGDAAEVERCLARRSGDLDARDKQHRTALHLACASGHVQVVTLLVNRKCQIDICDKENRTPLIQAVHCQEEACAVILLKHGANPNLKDIYGNTALHYAVYSESTSLAEKLLSHGAHIEALDKDSNTPLLFAIICKKEKMVEFLLKKKASTHAVDRLRRSALMLAVYYDSPGIVSILLKQNIDVFAQDMCGRDAEDYAISHHLTKIQQQILEHKQKILKKEKSDVGSSDESAVSIFHELRVDSLPASDDKDLSVATKQCVPEKVSEPLPGPSHEKGNRIVNGQGEGPPAKHPSLKPTTGVEDPAVKGAVQRKNVQTLRAEQALPVASEEEQERHERSEKKQPQVKKGNNTNKSEKIQLSENICDSTSSAAAGRLTQQRKIGKTYPQQFPKKLKEEHDKCTLKQENEEKTNVNMLYKKNREELERKEKQYKKEVEAKQLEPTVQSLEMKSKTARNTPNRDFHNHEETKGLMDENCILKADIAILRQEICTMKNDNLEKENKYLKDIKIVKETNAALEKYIKLNEEMITETAFRYQQELNDLKAENTRLNAELLKEKESKKRLEADIESYQSRLAAAIGKHSESVKTERNVKLALERTQDVSVQVEMSSAISKVKDENEFLTEQLSETQIKFNALKDKFRKTRDSLRKKSLALETVQNDLRKTQQQTQEMKEMYQNAEAKVNNSTGKWNCVEERICHLQRENAWLVQQLDDVHQKEDHKEIVTNIQRGFIESGKKDLVLEEKSKKLMNECDHLKESLFQYEREKAEGVVSIKEDKYFQTSRKKI.

ANK repeat units follow at residues 32-65 (SELQ…ARDK), 66-95 (QHRT…QIDI), 99-128 (ENRT…NPNL), 132-161 (YGNT…HIEA), 165-194 (DSNT…STHA), and 198-227 (LRRS…DVFA). 2 disordered regions span residues 302–343 (PEKV…GVED) and 355–401 (VQTL…QLSE). A compositionally biased stretch (basic and acidic residues) spans 372-382 (QERHERSEKKQ). 3 coiled-coil regions span residues 431 to 480 (KKLK…KQLE), 565 to 724 (EMIT…NNST), and 776 to 805 (LVLE…EKAE).

The protein is Ankyrin repeat domain-containing protein 20B (ANKRD20A8P) of Homo sapiens (Human).